The following is a 432-amino-acid chain: NADH-quinone oxidoreductase subunit D (432 aa).

The protein belongs to the complex I 49 kDa subunit family. NDH-1 is composed of 14 different subunits. Subunits NuoB, C, D, E, F, and G constitute the peripheral sector of the complex.

The protein localises to the cell membrane. The catalysed reaction is a quinone + NADH + 5 H(+)(in) = a quinol + NAD(+) + 4 H(+)(out). Its function is as follows. NDH-1 shuttles electrons from NADH, via FMN and iron-sulfur (Fe-S) centers, to quinones in the respiratory chain. The immediate electron acceptor for the enzyme in this species is believed to be a menaquinone. Couples the redox reaction to proton translocation (for every two electrons transferred, four hydrogen ions are translocated across the cytoplasmic membrane), and thus conserves the redox energy in a proton gradient. This chain is NADH-quinone oxidoreductase subunit D, found in Mycobacterium marinum (strain ATCC BAA-535 / M).